Reading from the N-terminus, the 350-residue chain is Ribosome production factor 2 homolog (350 aa).

The Brix domain occupies 28 to 266 (KTCLFLRGTT…LGRMREPDPA (239 aa)). The segment covering 192–202 (PTSSTSTNNDG) has biased composition (polar residues). Disordered stretches follow at residues 192 to 219 (PTSSTSTNNDGENPAPLPGMTDPRSIDP) and 301 to 350 (MGKT…KVKG).

Belongs to the RPF2 family. In terms of assembly, component of a hexameric 5S RNP precursor complex, composed of 5S RNA, RRS1, RPF2, RPL5, RPL11 and SYO1; this complex acts as a precursor for ribosome assembly.

The protein localises to the nucleus. Its subcellular location is the nucleolus. Its function is as follows. Involved in ribosomal large subunit assembly. This chain is Ribosome production factor 2 homolog, found in Chaetomium thermophilum (strain DSM 1495 / CBS 144.50 / IMI 039719) (Thermochaetoides thermophila).